Here is a 3567-residue protein sequence, read N- to C-terminus: Sushi, von Willebrand factor type A, EGF and pentraxin domain-containing protein 1 (3567 aa).

The signal sequence occupies residues 1–17 (MWSRLAFCCWALALVSG). The VWFA domain maps to 84–265 (ELVFLVDESS…LARRALHEDL (182 aa)). Residue Asn187 is glycosylated (N-linked (GlcNAc...) asparagine). Sushi domains are found at residues 377-436 (VHCP…FCRV), 437-496 (RTCP…RCVE), and 497-561 (RHCA…VCKD). 6 disulfides stabilise this stretch: Cys379-Cys421, Cys407-Cys434, Cys439-Cys481, Cys467-Cys494, Cys499-Cys544, and Cys530-Cys559. HYR domains lie at 560-644 (KDVE…KVID) and 645-724 (VEPP…VIKG). The Sushi 4 domain maps to 725–789 (SPCEVPFTPV…YSTEWPDCAI (65 aa)). Cystine bridges form between Cys727/Cys769, Cys753/Cys787, Cys1196/Cys1207, Cys1201/Cys1216, Cys1218/Cys1227, Cys1234/Cys1245, Cys1239/Cys1254, Cys1256/Cys1265, Cys1272/Cys1283, Cys1277/Cys1292, Cys1294/Cys1303, Cys1310/Cys1321, Cys1315/Cys1330, Cys1332/Cys1341, Cys1348/Cys1359, Cys1353/Cys1368, Cys1370/Cys1379, Cys1386/Cys1397, Cys1391/Cys1406, and Cys1408/Cys1417. Residues 1192-1228 (VFHECFLNPCHNSGTCQQLGRGYVCLCPPGYTGLKCE) enclose the EGF-like 1 domain. Residues 1230–1266 (DIDECSSLPCLNGGICRDQVGGFTCECSLGYSGQICE) form the EGF-like 2; calcium-binding domain. In terms of domain architecture, EGF-like 3; calcium-binding spans 1268 to 1304 (NINECISSPCLNKGTCTDGLASYRCTCVKGYMGVHCE). The 37-residue stretch at 1306–1342 (DVNECQSSPCLNNAVCKDQVGGFSCKCPPGFLGTRCE) folds into the EGF-like 4; calcium-binding domain. One can recognise an EGF-like 5; calcium-binding domain in the interval 1344–1380 (NVDECLSQPCQNGATCKDGANSFRCQCPAGFTGTHCE). The 37-residue stretch at 1382 to 1418 (NINECQSNPCRNQATCVDELNSYSCKCQPGFSGHRCE) folds into the EGF-like 6; calcium-binding domain. The region spanning 1423–1627 (SGFNLDFEVS…VKVDSSSMFC (205 aa)) is the Pentraxin (PTX) domain. 2 Sushi domains span residues 1628–1686 (SDCP…HCER) and 1687–1744 (IRCG…SCLD). 35 disulfides stabilise this stretch: Cys1630-Cys1671, Cys1657-Cys1684, Cys1689-Cys1729, Cys1715-Cys1742, Cys1748-Cys1760, Cys1754-Cys1769, Cys1771-Cys1782, Cys1788-Cys1828, Cys1814-Cys1841, Cys1846-Cys1886, Cys1872-Cys1899, Cys1904-Cys1944, Cys1930-Cys1957, Cys1962-Cys2002, Cys1988-Cys2015, Cys2020-Cys2060, Cys2046-Cys2077, Cys2082-Cys2125, Cys2111-Cys2140, Cys2145-Cys2185, Cys2171-Cys2198, Cys2203-Cys2244, Cys2230-Cys2258, Cys2263-Cys2303, Cys2289-Cys2317, Cys2322-Cys2362, Cys2348-Cys2375, Cys2380-Cys2421, Cys2407-Cys2434, Cys2439-Cys2479, Cys2465-Cys2492, Cys2497-Cys2537, Cys2523-Cys2550, Cys2555-Cys2595, and Cys2581-Cys2607. In terms of domain architecture, EGF-like 7; calcium-binding spans 1744–1783 (DVDECAVGSDCSEHASCLNTNGSYVCSCNPPYTGDGKNCA). Sushi domains lie at 1780–1843 (KNCA…SCEA), 1844–1901 (ISCG…VCEL), 1902–1959 (VKCS…SCQL), 1960–2017 (VSCG…QCLA), 2018–2079 (VSCD…RCIA), 2080–2142 (HFCE…QCIP), 2143–2200 (VRCG…TCHP), 2201–2260 (VSCN…SCTP), 2261–2319 (LNCG…KCVP), 2320–2377 (TKCA…ICKM), 2378–2436 (VLCP…ECVP), 2437–2494 (VECP…MCKP), 2495–2552 (IECP…SCDA), and 2553–2609 (IHCS…TCVP). Residues 2638-2645 (DMMEVPYL) are important for the interaction with integrin ITGA9:ITGB1. Sushi domains are found at residues 2660–2711 (NTKE…SCIS), 2712–2769 (IECD…RCEA), 2770–2827 (ISCS…MCIP), 2828–2885 (VDCG…SCMP), 2886–2943 (VRCP…VCKP), 2944–3001 (ATCG…SCLP), 3002–3057 (CRCS…LCEH), 3058–3115 (AQCG…TCEP), 3116–3174 (LSCG…TCSP), 3175–3234 (KKCP…SCIP), 3235–3292 (VVCG…VCRE), 3293–3350 (NRCE…LCKP), 3351–3409 (NPCP…RCEK), and 3410–3466 (ISCG…VCRA). 33 disulfides stabilise this stretch: Cys2682–Cys2709, Cys2714–Cys2754, Cys2740–Cys2767, Cys2772–Cys2812, Cys2798–Cys2825, Cys2830–Cys2870, Cys2856–Cys2883, Cys2888–Cys2928, Cys2914–Cys2941, Cys2946–Cys2986, Cys2972–Cys2999, Cys3004–Cys3043, Cys3029–Cys3055, Cys3060–Cys3100, Cys3086–Cys3113, Cys3118–Cys3159, Cys3144–Cys3172, Cys3177–Cys3217, Cys3203–Cys3232, Cys3237–Cys3277, Cys3263–Cys3290, Cys3295–Cys3335, Cys3321–Cys3348, Cys3353–Cys3394, Cys3380–Cys3407, Cys3412–Cys3452, Cys3438–Cys3464, Cys3500–Cys3510, Cys3504–Cys3516, Cys3518–Cys3527, Cys3532–Cys3542, Cys3536–Cys3548, and Cys3550–Cys3559. EGF-like domains are found at residues 3496-3528 (EEPI…SRCH) and 3529-3560 (TATC…HDCS).

Interacts (via Sushi domain 21) with ITGA9:ITGB1; thereby inhibits Ca(2+) intracellular signaling and as a result represses vasocontraction. Interacts (via Sushi domain 21) with ITGA4:ITGB1; thereby inhibits Ca(2+) intracellular signaling and as a result represses vasocontraction. Interacts with ANGPT1 and ANGPT2. Interacts with PEAR1 (via extracellular domain). Interacts with HSPG2, TLN1, FN1, COPA, CCT2, IQGAP1, LAMC1 and NID1. Interacts (via C-terminus) with TIE1. Expressed in the media layer of the arterial wall (at protein level). Highly expressed in lung and placenta, weakly expressed in the kidney, heart, brain and spleen. Also expressed in bone and periosteum, but not in cartilage and skeletal muscle.

The protein resides in the secreted. It localises to the nucleus. The protein localises to the cytoplasm. Its subcellular location is the membrane. Its function is as follows. Required for morphological development, cell alignment and migration of lymphatic endothelial cells during embryonic development, potentially via modulation of ANGPT2-TIE1 signaling and subsequent activation of FOXC2 transcription. Required for embryonic lymphatic vascular development, via mediating the correct formation of the first lymphovenous contact site and tight association of the lymphatic endothelium with the venous endothelium. Represses PRKCA-mediated L-type voltage-gated channel Ca(2+) influx and ROCK-mediated calcium sensitivity in vascular smooth muscle cells, via its interaction with integrins, thereby inhibiting vasocontraction. Promotes platelet activation, via its interaction with PEAR1 and subsequent activation of AKT/mTOR signaling. Plays a role in epidermal development and keratinocyte differentiation, independent of cell-cell adhesion. May play a role in initial cell attachment of stromal osteogenic cells. May promote myoblast cell adhesion when in the presence of integrin ITGA9:ITGB1. The chain is Sushi, von Willebrand factor type A, EGF and pentraxin domain-containing protein 1 (Svep1) from Mus musculus (Mouse).